The following is a 1160-amino-acid chain: DNA polymerase III subunit alpha (1160 aa).

It belongs to the DNA polymerase type-C family. DnaE subfamily. As to quaternary structure, the DNA polymerase holoenzyme is a complex that contains 10 different types of subunits. These subunits are organized into 3 functionally essential subassemblies: the pol III core, the beta sliding clamp processivity factor and the clamp-loading complex. The pol III core (subunits alpha,epsilon and theta) contains the polymerase and the 3'-5' exonuclease proofreading activities. The polymerase is tethered to the template via the sliding clamp processivity factor. The clamp-loading complex assembles the beta processivity factor onto the primer template and plays a central role in the organization and communication at the replication fork. This complex contains delta, delta', psi and chi, and copies of either or both of two different DnaX proteins, gamma and tau. The composition of the holoenzyme is, therefore: (alpha,epsilon,theta)[2]-(gamma/tau)[3]-delta,delta', psi,chi-beta[4].

It localises to the cytoplasm. The catalysed reaction is DNA(n) + a 2'-deoxyribonucleoside 5'-triphosphate = DNA(n+1) + diphosphate. Functionally, DNA polymerase III is a complex, multichain enzyme responsible for most of the replicative synthesis in bacteria. This DNA polymerase also exhibits 3' to 5' exonuclease activity. The alpha chain is the DNA polymerase. In Escherichia coli O157:H7, this protein is DNA polymerase III subunit alpha (dnaE).